The sequence spans 566 residues: MDVENLIITTLKDKVRELTGNEMDIRLDEPPAINMGDYSTNISFRLAKDLKKAPKMIAEDIANSLSILGIEKIEAVNGYINFFMNYSDFSKETVSKISAEKENFGKLEKRDEKVILEHTSANPNGPFHIGHGRNMVIGDSLKRILIASGYDVETQYYVNDMGRQEAIVVFGNERFELDKSKKADHAIGEVYVETNKLLAENEELEQEILNLMKNYEEACEAGIENELTEKFKNAVDYSLGGFKETLSTLNIYHDKFVWESEFVKSGMVRDVIKRLMDTGKVVEDEVFRLDLSDYGLEKKLVLARLNGTSLYSTRDIVYHINKMENCDFAVNLLGADHKLTAVMVNKTLALLGYNEAEVVFYEFISLPEGSMSTRRGRFISMDELFEEAKSRAAEEVRKRGVAENEEEIEEIAKRIAVGAVRYNIVRIAPEKPMVFRWDEALDFEKVGCPVIQYAHARCSRILENVETISNDNLFAYEMNENEKTIVKLLSKLPKIVEKAAEVRKPQIVANYVLDVAQGFNKFYANCPVLKEENETIKNSRLAIVNTTKTVLENTLDLLGIEMPGKM.

The 'HIGH' region signature appears at 121–131; that stretch reads ANPNGPFHIGH.

The protein belongs to the class-I aminoacyl-tRNA synthetase family.

It localises to the cytoplasm. The enzyme catalyses tRNA(Arg) + L-arginine + ATP = L-arginyl-tRNA(Arg) + AMP + diphosphate. The protein is Arginine--tRNA ligase of Methanococcus maripaludis (strain C5 / ATCC BAA-1333).